A 173-amino-acid chain; its full sequence is Putative phosphoesterase GK0864 (173 aa).

Catalysis depends on H34, which acts as the Proton donor. 2 consecutive short sequence motifs (HXTX) follow at residues 34 to 37 (HITL) and 115 to 118 (HITI). The active-site Proton acceptor is the H115.

It belongs to the 2H phosphoesterase superfamily. YjcG family.

In Geobacillus kaustophilus (strain HTA426), this protein is Putative phosphoesterase GK0864.